Consider the following 366-residue polypeptide: Endogenous Bornavirus-like nucleoprotein 1 (366 aa).

The span at 1 to 15 (MSRPRNNPQTSSPQD) shows a compositional bias: polar residues. Residues 1-22 (MSRPRNNPQTSSPQDSTKDGSS) are disordered.

In terms of tissue distribution, expression detected by RT-PCR in a few cell lines, including OL, HEK293T and MOLT-4. Not observed in HeLa cells.

Its function is as follows. May act as an RNA-binding protein. Highly homologous to the bornavirus nucleocapsid N protein that binds viral RNA and oligomerizes. The chain is Endogenous Bornavirus-like nucleoprotein 1 (EBLN1) from Homo sapiens (Human).